We begin with the raw amino-acid sequence, 1165 residues long: Protein hsr-9 (1165 aa).

Disordered stretches follow at residues 1 to 26 (MASS…PTTT), 70 to 578 (AEDE…TEME), 608 to 713 (KYSM…IPLK), and 874 to 913 (TRAR…EEEE). Low complexity predominate over residues 16-26 (TVTQTSLPTTT). Basic and acidic residues-rich tracts occupy residues 98-114 (KDAK…KSES), 123-140 (TFEK…KLDI), and 149-162 (DTEK…KVVG). Acidic residues-rich tracts occupy residues 163–179 (DEDE…DEDE), 211–230 (EKEE…EVEV), and 280–289 (GESEANEENQ). Residues 306-317 (ATVSSTPSSNTP) show a composition bias toward polar residues. The segment covering 397-408 (NTEHPTEEETPK) has biased composition (basic and acidic residues). The segment covering 415–431 (SAASSSATSSAVPTPRS) has biased composition (low complexity). Residues 446–461 (LQEKETEDPTKTHDTN) show a composition bias toward basic and acidic residues. Positions 533–543 (DPIEEADETIE) are enriched in acidic residues. Residues 554 to 563 (AAKSAPSSSK) show a composition bias toward low complexity. Composition is skewed to basic and acidic residues over residues 662-671 (KKEEEHHEND) and 694-708 (SEAS…KKEP). Residues 923-1028 (IGKNIFTGKV…KCVDYTDYVL (106 aa)) enclose the BRCT domain.

As to expression, expressed in germ cells.

It localises to the nucleus. Functionally, may have a role in DNA double-strand break repair following gamma-irradiation. The polypeptide is Protein hsr-9 (Caenorhabditis elegans).